The sequence spans 200 residues: Holliday junction branch migration complex subunit RuvA (200 aa).

A domain I region spans residues 1–64 (MYAYFRGRVV…EDALQLYGFS (64 aa)). Residues 65–143 (SEEEKQLFRL…KLSPPGAAAT (79 aa)) form a domain II region. Positions 144 to 154 (PAGAVQCGIRE) are flexible linker. Positions 154–200 (EDATNALLTLGFSRTAAQQAVAGVLEANPGGSVEDVVKSALLAMHNR) are domain III.

Belongs to the RuvA family. In terms of assembly, homotetramer. Forms an RuvA(8)-RuvB(12)-Holliday junction (HJ) complex. HJ DNA is sandwiched between 2 RuvA tetramers; dsDNA enters through RuvA and exits via RuvB. An RuvB hexamer assembles on each DNA strand where it exits the tetramer. Each RuvB hexamer is contacted by two RuvA subunits (via domain III) on 2 adjacent RuvB subunits; this complex drives branch migration. In the full resolvosome a probable DNA-RuvA(4)-RuvB(12)-RuvC(2) complex forms which resolves the HJ.

The protein resides in the cytoplasm. Its function is as follows. The RuvA-RuvB-RuvC complex processes Holliday junction (HJ) DNA during genetic recombination and DNA repair, while the RuvA-RuvB complex plays an important role in the rescue of blocked DNA replication forks via replication fork reversal (RFR). RuvA specifically binds to HJ cruciform DNA, conferring on it an open structure. The RuvB hexamer acts as an ATP-dependent pump, pulling dsDNA into and through the RuvAB complex. HJ branch migration allows RuvC to scan DNA until it finds its consensus sequence, where it cleaves and resolves the cruciform DNA. The sequence is that of Holliday junction branch migration complex subunit RuvA from Chlorobium luteolum (strain DSM 273 / BCRC 81028 / 2530) (Pelodictyon luteolum).